We begin with the raw amino-acid sequence, 178 residues long: Probable chorismate pyruvate-lyase (178 aa).

Residues Arg-72, Leu-110, and Glu-169 each contribute to the substrate site.

The protein belongs to the UbiC family.

It is found in the cytoplasm. The enzyme catalyses chorismate = 4-hydroxybenzoate + pyruvate. Its pathway is cofactor biosynthesis; ubiquinone biosynthesis. Removes the pyruvyl group from chorismate, with concomitant aromatization of the ring, to provide 4-hydroxybenzoate (4HB) for the ubiquinone pathway. In Nitrosomonas europaea (strain ATCC 19718 / CIP 103999 / KCTC 2705 / NBRC 14298), this protein is Probable chorismate pyruvate-lyase.